The chain runs to 260 residues: Hydroxyethylthiazole kinase 1 (260 aa).

Methionine 39 serves as a coordination point for substrate. ATP is bound by residues arginine 115 and threonine 160. Glycine 187 is a binding site for substrate.

The protein belongs to the Thz kinase family. Mg(2+) serves as cofactor.

The enzyme catalyses 5-(2-hydroxyethyl)-4-methylthiazole + ATP = 4-methyl-5-(2-phosphooxyethyl)-thiazole + ADP + H(+). It functions in the pathway cofactor biosynthesis; thiamine diphosphate biosynthesis; 4-methyl-5-(2-phosphoethyl)-thiazole from 5-(2-hydroxyethyl)-4-methylthiazole: step 1/1. Functionally, catalyzes the phosphorylation of the hydroxyl group of 4-methyl-5-beta-hydroxyethylthiazole (THZ). This Streptococcus pneumoniae (strain 70585) protein is Hydroxyethylthiazole kinase 1.